Consider the following 190-residue polypeptide: Selenoprotein S (190 aa).

A helical membrane pass occupies residues 28–48; the sequence is SLLATYGWYIVFCCILLYVVF. Residues 78–90 form a VCP/p97-interacting motif (VIM) region; sequence RQEALAAARLKMQ. Residues 115–138 are compositionally biased toward basic and acidic residues; the sequence is KIERWDSVQEGRSYRGDARKRQEE. Residues 115–190 are disordered; that stretch reads KIERWDSVQE…RRGPSSGGUG (76 aa). S140 bears the Phosphoserine mark. Residues 160–174 show a composition bias toward gly residues; sequence RGGGYNPLSGEGGGA. Position 189 (U189) is a non-standard amino acid, selenocysteine.

Belongs to the selenoprotein S family. In terms of assembly, interacts with DERL1 and (via VIM motif) with VCP, suggesting that it forms a membrane complex with DERL1 that serves as a receptor for VCP. Also interacts with DERL2, DERL3 and SELENOK. The SELENOK-SELENOS complex interacts with VCP. Post-translationally, truncated SELENOS proteins produced by failed UGA/Sec decoding are ubiquitinated by the CRL2(KLHDC2) and CRL2(KLHDC3) complexes, which recognizes the glycine (Gly) at the C-terminus of truncated SELENOS proteins. Truncated SELENOS proteins produced by failed UGA/Sec decoding are also ubiquitinated by the CRL5(KLHDC1) complex. Ubiquitously expressed. Highest expression in liver and lung, with lower levels detected in spleen, kidney, brain, lymph nodes, small intestine, stomach and heart. Very low expression detected in longissimus dorsi.

The protein localises to the cytoplasm. Its subcellular location is the endoplasmic reticulum membrane. In terms of biological role, involved in the degradation process of misfolded endoplasmic reticulum (ER) luminal proteins. Participates in the transfer of misfolded proteins from the ER to the cytosol, where they are destroyed by the proteasome in a ubiquitin-dependent manner. Probably acts by serving as a linker between DERL1, which mediates the retrotranslocation of misfolded proteins into the cytosol, and the ATPase complex VCP, which mediates the translocation and ubiquitination. This is Selenoprotein S from Sus scrofa (Pig).